A 1053-amino-acid polypeptide reads, in one-letter code: DNA-directed RNA polymerase subunit beta' (1053 aa).

The Zn(2+) site is built by cysteine 60, cysteine 62, cysteine 75, and cysteine 78. Mg(2+)-binding residues include aspartate 449, aspartate 451, and aspartate 453. Residues cysteine 818, cysteine 892, cysteine 899, and cysteine 902 each coordinate Zn(2+).

It belongs to the RNA polymerase beta' chain family. The RNAP catalytic core consists of 2 alpha, 1 beta, 1 beta' and 1 omega subunit. When a sigma factor is associated with the core the holoenzyme is formed, which can initiate transcription. The cofactor is Mg(2+). Zn(2+) is required as a cofactor.

The enzyme catalyses RNA(n) + a ribonucleoside 5'-triphosphate = RNA(n+1) + diphosphate. DNA-dependent RNA polymerase catalyzes the transcription of DNA into RNA using the four ribonucleoside triphosphates as substrates. This chain is DNA-directed RNA polymerase subunit beta', found in Listeria grayi (Listeria murrayi).